A 327-amino-acid chain; its full sequence is PDZ and LIM domain protein 1 (327 aa).

Residue Thr-2 is modified to N-acetylthreonine. The PDZ domain maps to Thr-3 to Glu-85. Phosphoserine is present on residues Ser-90 and Ser-130. Tyr-142 carries the phosphotyrosine modification. The tract at residues Val-161–Gly-184 is disordered. The 60-residue stretch at Pro-256 to Pro-315 folds into the LIM zinc-binding domain. Cys-258, Cys-261, His-278, Cys-281, Cys-284, Cys-287, Cys-305, and His-308 together coordinate Zn(2+). Thr-314 carries the phosphothreonine modification. At Tyr-319 the chain carries Phosphotyrosine.

In terms of assembly, interacts with ACTN1, ACTN2 and ACTN4. Interacts with PDLIM4. In terms of tissue distribution, expressed in heart, lung, spleen, testis and skeletal muscle.

The protein localises to the cytoplasm. It is found in the cytoskeleton. Its subcellular location is the myofibril. It localises to the sarcomere. The protein resides in the z line. Its function is as follows. Cytoskeletal protein that may act as an adapter that brings other proteins (like kinases) to the cytoskeleton. Involved in assembly, disassembly and directioning of stress fibers in fibroblasts. Required for the localization of ACTN1 and PALLD to stress fibers. Required for cell migration and in maintaining cell polarity of fibroblasts. This is PDZ and LIM domain protein 1 (Pdlim1) from Mus musculus (Mouse).